We begin with the raw amino-acid sequence, 303 residues long: HTH-type transcriptional regulator LinR (303 aa).

One can recognise an HTH lysR-type domain in the interval 6 to 63 (LDFRHLVLLDALLKRHSVSAAARELDLPQPTASHGLARLRKALGDPLLVRARDGMEPT). The H-T-H motif DNA-binding region spans 23-42 (VSAAARELDLPQPTASHGLA).

The protein belongs to the LysR transcriptional regulatory family.

Its function is as follows. Positively regulates the transcription of the linD and linE genes that are involved in gamma-hexachlorocyclohexane (gamma-HCH or lindane) degradation. This degradation pathway allows S.japonicum UT26 to grow on gamma-HCH as the sole source of carbon and energy. The chain is HTH-type transcriptional regulator LinR (linR) from Sphingobium indicum (strain DSM 16413 / CCM 7287 / MTCC 6362 / UT26 / NBRC 101211 / UT26S) (Sphingobium japonicum).